A 121-amino-acid chain; its full sequence is Holo-[acyl-carrier-protein] synthase (121 aa).

Asp-8 and Glu-55 together coordinate Mg(2+).

Belongs to the P-Pant transferase superfamily. AcpS family. Mg(2+) serves as cofactor.

Its subcellular location is the cytoplasm. It carries out the reaction apo-[ACP] + CoA = holo-[ACP] + adenosine 3',5'-bisphosphate + H(+). Its function is as follows. Transfers the 4'-phosphopantetheine moiety from coenzyme A to a Ser of acyl-carrier-protein. The chain is Holo-[acyl-carrier-protein] synthase from Caldicellulosiruptor bescii (strain ATCC BAA-1888 / DSM 6725 / KCTC 15123 / Z-1320) (Anaerocellum thermophilum).